Consider the following 148-residue polypeptide: Urease accessory protein UreE (148 aa).

The protein belongs to the UreE family.

It is found in the cytoplasm. Involved in urease metallocenter assembly. Binds nickel. Probably functions as a nickel donor during metallocenter assembly. The polypeptide is Urease accessory protein UreE (Geobacillus kaustophilus (strain HTA426)).